Reading from the N-terminus, the 467-residue chain is Putative odorant receptor 85e (467 aa).

Over 1 to 60 the chain is Cytoplasmic; it reads MASLQFHGNVDADIRYDISLDPARESNLFRLLMGLQLANGTKPSPRLPKWWPKRLEMIGK. A helical transmembrane segment spans residues 61 to 81; that stretch reads VLPKAYCSMVIFTSLHLGVLF. The Extracellular portion of the chain corresponds to 82-98; it reads TKTTLDVLPTGELQAIT. Residues 99–119 traverse the membrane as a helical segment; sequence DALTMTIIYFFTGYGTIYWCL. At 120-159 the chain is on the cytoplasmic side; that stretch reads RSRRLLAYMEHMNREYRHHSLAGVTFVSSHAAFRMSRNFT. A helical membrane pass occupies residues 160–180; the sequence is VVWIMSCLLGVISWGVSPLML. Residues 181 to 212 are Extracellular-facing; sequence GIRMLPLQCWYPFDALGPGTYTAVYATQLFGQ. Residues 213 to 233 traverse the membrane as a helical segment; the sequence is IMVGMTFGFGGSLFVTLSLLL. At 234 to 286 the chain is on the cytoplasmic side; the sequence is LGQFDVLYCSLKNLDAHTKLLGGESVNGLSSLQEELLLGDSKRELNQYVLLQE. The helical transmembrane segment at 287–307 threads the bilayer; it reads HPTDLLRLSAGRKCPDQGNAF. Topologically, residues 308–334 are extracellular; the sequence is HNALVECIRLHRFILHCSQELENLFSP. A helical membrane pass occupies residues 335–355; that stretch reads YCLVKSLQITFQLCLLVFVGV. Residues 356–367 are Cytoplasmic-facing; it reads SGTREVLRIVNQ. Residues 368-388 form a helical membrane-spanning segment; sequence LQYLGLTIFELLMFTYCGELL. Over 389–467 the chain is Extracellular; that stretch reads SRHSIRSGDA…LAAKKTESEL (79 aa).

Belongs to the insect chemoreceptor superfamily. Heteromeric odorant receptor channel (TC 1.A.69) family. Or2a subfamily. As to quaternary structure, interacts with Orco. Complexes exist early in the endomembrane system in olfactory sensory neurons (OSNs), coupling these complexes to the conserved ciliary trafficking pathway. In terms of tissue distribution, expressed in 15% of the 120 sensory neurons within the maxillary palp.

The protein localises to the cell membrane. Its function is as follows. Odorant receptor which mediates acceptance or avoidance behavior, depending on its substrates. The odorant receptor repertoire encodes a large collection of odor stimuli that vary widely in identity, intensity, and duration. May form a complex with Orco to form odorant-sensing units, providing sensitive and prolonged odorant signaling and calcium permeability. In Drosophila melanogaster (Fruit fly), this protein is Putative odorant receptor 85e (Or85e).